A 121-amino-acid polypeptide reads, in one-letter code: Large ribosomal subunit protein bL12 (121 aa).

The protein belongs to the bacterial ribosomal protein bL12 family. Homodimer. Part of the ribosomal stalk of the 50S ribosomal subunit. Forms a multimeric L10(L12)X complex, where L10 forms an elongated spine to which 2 to 4 L12 dimers bind in a sequential fashion. Binds GTP-bound translation factors.

Forms part of the ribosomal stalk which helps the ribosome interact with GTP-bound translation factors. Is thus essential for accurate translation. In Psychromonas ingrahamii (strain DSM 17664 / CCUG 51855 / 37), this protein is Large ribosomal subunit protein bL12.